A 69-amino-acid polypeptide reads, in one-letter code: Pancreatic propolypeptide YG (69 aa).

Belongs to the NPY family.

It localises to the secreted. This is Pancreatic propolypeptide YG from Lophius americanus (American angler).